The primary structure comprises 105 residues: Class I hydrophobin 1 (105 aa).

An N-terminal signal peptide occupies residues 1-17; that stretch reads MQFTSFAILAISAVASA. Disulfide bonds link cysteine 36–cysteine 85, cysteine 44–cysteine 78, cysteine 45–cysteine 63, and cysteine 86–cysteine 100. N-linked (GlcNAc...) asparagine glycans are attached at residues asparagine 48, asparagine 67, and asparagine 97.

The protein belongs to the fungal hydrophobin family. In terms of assembly, self-assembles to form functional amyloid fibrils called rodlets. Self-assembly into fibrillar rodlets occurs spontaneously at hydrophobic:hydrophilic interfaces and the rodlets further associate laterally to form amphipathic monolayers. Abundant on conidia and aerial structures formed in vitro and emerging from disease lesions on infected tomato plants.

The protein localises to the secreted. It is found in the cell wall. In terms of biological role, aerial growth, conidiation, and dispersal of filamentous fungi in the environment rely upon a capability of their secreting small amphipathic proteins called hydrophobins (HPBs) with low sequence identity. Class I can self-assemble into an outermost layer of rodlet bundles on aerial cell surfaces, conferring cellular hydrophobicity that supports fungal growth, development and dispersal; whereas Class II form highly ordered films at water-air interfaces through intermolecular interactions but contribute nothing to the rodlet structure. Hcf-1 is a class I hydrophobin that is not necessary for the development of hyphae or conidia but acts as the main determinant of conidium hydrophobicity and, thus, is required for efficient water-mediated dispersal of conidia. Forms a component of the rodlet layer, but other hydrophobins must also participate in this proces. The protein is Class I hydrophobin 1 of Passalora fulva (Tomato leaf mold).